Consider the following 358-residue polypeptide: Plastoglobulin-1, chloroplastic (358 aa).

The transit peptide at 1–47 directs the protein to the chloroplast; the sequence is MALLSSTLRAPLVFSKNPKPVSLSSLHSRIYLSPRSPRFPSLRFISA. Residues 48 to 114 form a disordered region; that stretch reads AGDTGDAEKP…NDAGNGTPTF (67 aa).

This sequence belongs to the PAP/fibrillin family.

The protein localises to the plastid. It localises to the chloroplast. Functionally, may form together with other plastoglobulins a coat on the surface of the lipoprotein particle. The coat may contain receptors for attachment to the thylakoid membrane as well as regulatory proteins that may function in the transfer of lipids to and from the thylakoid membranes. The polypeptide is Plastoglobulin-1, chloroplastic (PG1) (Pisum sativum (Garden pea)).